We begin with the raw amino-acid sequence, 280 residues long: NAD(+) hydrolase TirS (280 aa).

Residues 22 to 94 (MNKLPDEIDR…KINLQKEQSR (73 aa)) are a coiled coil. In terms of domain architecture, TIR spans 141–275 (IEYDVFLSHS…EIVEKIYQVI (135 aa)). NAD(+) contacts are provided by residues 150–151 (SS) and glutamate 180. Residue glutamate 216 is part of the active site.

Its subcellular location is the secreted. The catalysed reaction is NAD(+) + H2O = ADP-D-ribose + nicotinamide + H(+). The enzyme catalyses NADP(+) + H2O = ADP-D-ribose 2'-phosphate + nicotinamide + H(+). Virulence factor that suppresses host Toll-like receptor 2 (TLR2)-mediated NF-kappa-B signaling upon infection. NAD(+) hydrolase (NADase) that catalyzes cleavage of NAD(+) into ADP-D-ribose (ADPR) and nicotinamide. Also able to hydrolyze NADP(+), but not other NAD(+)-related molecules. Able to reduce NAD(+) levels in host cells. The sequence is that of NAD(+) hydrolase TirS from Staphylococcus aureus (strain MSSA476).